Reading from the N-terminus, the 151-residue chain is UPF0208 membrane protein YPDSF_1972 (151 aa).

2 helical membrane passes run 46 to 66 (FGIRFMPPLAIFTLTWQIALG) and 69 to 89 (LGPAIATALFACGLPLQGLWW).

The protein belongs to the UPF0208 family.

The protein resides in the cell inner membrane. This is UPF0208 membrane protein YPDSF_1972 from Yersinia pestis (strain Pestoides F).